Consider the following 1297-residue polypeptide: DNA-directed RNA polymerase subunit beta'' (1297 aa).

C220, C293, C300, and C303 together coordinate Zn(2+). Residues 1278–1288 show a composition bias toward basic residues; that stretch reads RRRKQNTKTRK. The segment at 1278 to 1297 is disordered; it reads RRRKQNTKTRKNNLFSLNEK.

The protein belongs to the RNA polymerase beta' chain family. RpoC2 subfamily. As to quaternary structure, in plastids the minimal PEP RNA polymerase catalytic core is composed of four subunits: alpha, beta, beta', and beta''. When a (nuclear-encoded) sigma factor is associated with the core the holoenzyme is formed, which can initiate transcription. Zn(2+) is required as a cofactor.

Its subcellular location is the plastid. The protein localises to the chloroplast. It carries out the reaction RNA(n) + a ribonucleoside 5'-triphosphate = RNA(n+1) + diphosphate. DNA-dependent RNA polymerase catalyzes the transcription of DNA into RNA using the four ribonucleoside triphosphates as substrates. The protein is DNA-directed RNA polymerase subunit beta'' of Welwitschia mirabilis (Tree tumbo).